A 444-amino-acid polypeptide reads, in one-letter code: 23S rRNA (uracil(1939)-C(5))-methyltransferase RlmD (444 aa).

The TRAM domain occupies 11-70 (NSIKNHILKNIKVEKLDHRGRGLAYFQNKPLFIDGALAGELLEVQIVESKKRYSKGKIKK). [4Fe-4S] cluster-binding residues include cysteine 83, cysteine 89, cysteine 92, and cysteine 171. The S-adenosyl-L-methionine site is built by glutamine 277, phenylalanine 306, asparagine 311, glutamate 327, aspartate 354, and aspartate 376. Cysteine 402 serves as the catalytic Nucleophile.

Belongs to the class I-like SAM-binding methyltransferase superfamily. RNA M5U methyltransferase family. RlmD subfamily.

It carries out the reaction uridine(1939) in 23S rRNA + S-adenosyl-L-methionine = 5-methyluridine(1939) in 23S rRNA + S-adenosyl-L-homocysteine + H(+). Its function is as follows. Catalyzes the formation of 5-methyl-uridine at position 1939 (m5U1939) in 23S rRNA. The protein is 23S rRNA (uracil(1939)-C(5))-methyltransferase RlmD of Psychromonas ingrahamii (strain DSM 17664 / CCUG 51855 / 37).